The sequence spans 222 residues: LHFPL tetraspan subfamily member 3 protein (222 aa).

The next 4 membrane-spanning stretches (helical) occupy residues 22 to 42, 96 to 116, 126 to 146, and 177 to 197; these read IGVL…VCFI, FFIG…TLFF, ICAW…MIFP, and ILAI…VVLG.

This sequence belongs to the LHFP family. In terms of tissue distribution, brain-specific.

The protein resides in the membrane. In Mus musculus (Mouse), this protein is LHFPL tetraspan subfamily member 3 protein.